The following is a 1459-amino-acid chain: Endogenous retrovirus group K member 7 Pol protein (1459 aa).

One can recognise a Reverse transcriptase domain in the interval 57–245 (LEKGHIEPSF…TPFHYLGMQI (189 aa)). The LPQG motif lies at 161–164 (LPQG). A YXDD motif is present at residues 195 to 198 (YIDD). Positions 460 to 590 (LENALTVFTD…ADLLVSSALI (131 aa)) constitute an RNase H type-1 domain. Mg(2+) contacts are provided by Asp469, Glu497, Asp517, and Asp582. Residues 587-628 (SALIKAQELHALTHVNAAGLKNKFDVTWKQAKDIVQHCTQCQ) form an Integrase-type zinc finger. His596, His600, Cys624, and Cys627 together coordinate Zn(2+). The Integrase catalytic domain occupies 642 to 803 (RGLCPNALWQ…TSAEQHLTGK (162 aa)). The segment at residues 811–859 (KLIWWKDNKNKTWEIGKVITWGRGFACVSPGENQLPVWIPTRHLKFYNE) is a DNA-binding region (integrase-type).

The protein belongs to the beta type-B retroviral polymerase family. HERV class-II K(HML-2) pol subfamily.

It catalyses the reaction DNA(n) + a 2'-deoxyribonucleoside 5'-triphosphate = DNA(n+1) + diphosphate. The catalysed reaction is Endonucleolytic cleavage to 5'-phosphomonoester.. Functionally, early post-infection, the reverse transcriptase converts the viral RNA genome into double-stranded viral DNA. The RNase H domain of the reverse transcriptase performs two functions. It degrades the RNA template and specifically removes the RNA primer from the RNA/DNA hybrid. Following nuclear import, the integrase catalyzes the insertion of the linear, double-stranded viral DNA into the host cell chromosome. Endogenous Pol proteins may have kept, lost or modified their original function during evolution. The protein is Endogenous retrovirus group K member 7 Pol protein (ERVK-7) of Homo sapiens (Human).